Reading from the N-terminus, the 234-residue chain is Homeobox protein ceh-51 (234 aa).

Disordered regions lie at residues 128–154 (PPSF…RTPF) and 209–234 (QIKQ…HVIS). Positions 147-206 (RRGARTPFSDSQLYALRTRFEQCDTIKVDERRKLGAVIGLSPEQIKIWFQNRRFKLRKEK) form a DNA-binding region, homeobox. The span at 220–234 (SAKEEAEEDQKHVIS) shows a compositional bias: basic and acidic residues.

It belongs to the NK-2 homeobox family.

Its subcellular location is the nucleus. Its function is as follows. Required for mesoderm development, including specification of muscle and coelomocyte precursors. In Caenorhabditis elegans, this protein is Homeobox protein ceh-51.